The following is a 1036-amino-acid chain: MGGCEVREFLLQFGFFLPLLTAWPGDCSHVSNNQVVLLDTTTVLGELGWKTYPLNGWDAITEMDEHNRPIHTYQVCNVMEPNQNNWLRTNWISRDAAQKIYVEMKFTLRDCNSIPWVLGTCKETFNLFYMESDESHGIKFKPNQYTKIDTIAADESFTQMDLGDRILKLNTEIREVGPIERKGFYLAFQDIGACIALVSVRVFYKKCPFTVRNLAMFPDTIPRVDSSSLVEVRGSCVKSAEERDTPKLYCGADGDWLVPLGRCICSTGYEEIEGSCHACRPGFYKAFAGNTKCSKCPPHSLTYMEATSVCQCEKGYFRAEKDPPSMACTRPPSAPRNVVFNINETALILEWSPPSDTGGRKDLTYSVICKKCGLDTSQCEDCGGGLRFIPRHTGLINNSVIVLDFVSHVNYTFEIEAMNGVSELSFSPKPFTAITVTTDQDAPSLIGVVRKDWASQNSIALSWQAPAFSNGAILDYEIKYYEKEHEQLTYSSTRSKAPSVIITGLKPATKYVFHIRVRTATGYSGYSQKFEFETGDETSDMAAEQGQILVIATAAVGGFTLLVILTLFFLITGRCQWYIKAKMKSEEKRRNHLQNGHLRFPGIKTYIDPDTYEDPSLAVHEFAKEIDPSRIRIERVIGAGEFGEVCSGRLKTPGKREIPVAIKTLKGGHMDRQRRDFLREASIMGQFDHPNIIRLEGVVTKRSFPAIGVEAFCPSFLRAGFLNSIQAPHPVPGGGSLPPRIPAGRPVMIVVEYMENGSLDSFLRKHDGHFTVIQLVGMLRGIASGMKYLSDMGYVHRDLAARNILVNSNLVCKVSDFGLSRVLEDDPEAAYTTTGGKIPIRWTAPEAIAYRKFSSASDAWSYGIVMWEVMSYGERPYWEMSNQDVILSIEEGYRLPAPMGCPASLHQLMLHCWQKERNHRPKFTDIVSFLDKLIRNPSALHTLVEDILVMPESPGEVPEYPLFVTVGDWLDSIKMGQYKNNFVAAGFTTFDLISRMSIDDIRRIGVILIGHQRRIVSSIQTLRLHMMHIQEKGFHV.

Positions 1–22 (MGGCEVREFLLQFGFFLPLLTA) are cleaved as a signal peptide. Topologically, residues 23 to 550 (WPGDCSHVSN…MAAEQGQILV (528 aa)) are extracellular. The region spanning 34-212 (QVVLLDTTTV…FYKKCPFTVR (179 aa)) is the Eph LBD domain. Fibronectin type-III domains are found at residues 331–441 (PPSA…TDQD) and 442–537 (APSL…TGDE). N-linked (GlcNAc...) asparagine glycans are attached at residues N343, N397, and N410. A helical transmembrane segment spans residues 551–571 (IATAAVGGFTLLVILTLFFLI). Residues 572–1036 (TGRCQWYIKA…MHIQEKGFHV (465 aa)) lie on the Cytoplasmic side of the membrane. 2 positions are modified to phosphotyrosine; by autocatalysis: Y606 and Y612. The Protein kinase domain maps to 631–944 (IRIERVIGAG…RNPSALHTLV (314 aa)). ATP is bound by residues 637–645 (IGAGEFGEV) and K663. Residue D798 is the Proton acceptor of the active site. 2 positions are modified to phosphotyrosine; by autocatalysis: Y831 and Y978. Residues 961 to 1025 (PLFVTVGDWL…VSSIQTLRLH (65 aa)) enclose the SAM domain. Residues 1034–1036 (FHV) carry the PDZ-binding motif.

It belongs to the protein kinase superfamily. Tyr protein kinase family. Ephrin receptor subfamily. In terms of assembly, heterotetramer upon binding of the ligand. The heterotetramer is composed of an ephrin dimer and a receptor dimer. Oligomerization is probably required to induce biological responses. Interacts (via SAM domain) with ANKS1A (via SAM domain). In terms of tissue distribution, expressed in brain and testis.

It localises to the membrane. It catalyses the reaction L-tyrosyl-[protein] + ATP = O-phospho-L-tyrosyl-[protein] + ADP + H(+). Receptor tyrosine kinase which binds promiscuously GPI-anchored ephrin-A family ligands residing on adjacent cells, leading to contact-dependent bidirectional signaling into neighboring cells. The signaling pathway downstream of the receptor is referred to as forward signaling while the signaling pathway downstream of the ephrin ligand is referred to as reverse signaling. The sequence is that of Ephrin type-A receptor 6 (EPHA6) from Homo sapiens (Human).